Consider the following 500-residue polypeptide: Carnosic acid synthase (500 aa).

Residues 4-24 (LILLSLAFLASCVVAYSRRRP) form a helical membrane-spanning segment. Residue C443 coordinates heme.

It belongs to the cytochrome P450 family. Heme is required as a cofactor. Mostly expressed in young leaves, particularly in glandular trichomes.

The protein resides in the membrane. The enzyme catalyses 11-hydroxyferruginol + 3 reduced [NADPH--hemoprotein reductase] + 3 O2 = carnosate + 3 oxidized [NADPH--hemoprotein reductase] + 4 H2O + 4 H(+). It catalyses the reaction miltiradiene + 2 reduced [NADPH--hemoprotein reductase] + 2 O2 = miltiradien-20-al + 2 oxidized [NADPH--hemoprotein reductase] + 3 H2O + 2 H(+). The catalysed reaction is ferruginol + 3 reduced [NADPH--hemoprotein reductase] + 3 O2 = pisiferate + 3 oxidized [NADPH--hemoprotein reductase] + 4 H2O + 4 H(+). It participates in secondary metabolite biosynthesis; terpenoid biosynthesis. In terms of biological role, monooxygenase involved in the biosynthesis of carnosate, a potent antioxidant labdane-related diterpene natural product. Catalyzes the oxidation of 11-hydroxyferruginol to produce carnosate. Mediates the conversion of miltiradien into miltiradien-20-al. Also involved in the production of pisiferic acid and derivative products from ferruginol. The sequence is that of Carnosic acid synthase from Salvia fruticosa (Greek sage).